We begin with the raw amino-acid sequence, 322 residues long: Acetylglutamate kinase (322 aa).

Substrate is bound by residues 85–86 (GG), arginine 107, and asparagine 211.

Belongs to the acetylglutamate kinase family. ArgB subfamily.

The protein localises to the cytoplasm. It carries out the reaction N-acetyl-L-glutamate + ATP = N-acetyl-L-glutamyl 5-phosphate + ADP. Its pathway is amino-acid biosynthesis; L-arginine biosynthesis; N(2)-acetyl-L-ornithine from L-glutamate: step 2/4. Its function is as follows. Catalyzes the ATP-dependent phosphorylation of N-acetyl-L-glutamate. The sequence is that of Acetylglutamate kinase from Methanosarcina barkeri (strain Fusaro / DSM 804).